A 111-amino-acid chain; its full sequence is Large ribosomal subunit protein uL24 (111 aa).

Belongs to the universal ribosomal protein uL24 family. Part of the 50S ribosomal subunit.

In terms of biological role, one of two assembly initiator proteins, it binds directly to the 5'-end of the 23S rRNA, where it nucleates assembly of the 50S subunit. One of the proteins that surrounds the polypeptide exit tunnel on the outside of the subunit. This chain is Large ribosomal subunit protein uL24, found in Heliobacterium modesticaldum (strain ATCC 51547 / Ice1).